We begin with the raw amino-acid sequence, 233 residues long: uncharacterized protein (233 aa).

Belongs to the methyltransferase superfamily.

This is an uncharacterized protein from Bacillus subtilis (strain 168).